The chain runs to 653 residues: Transcription factor Ken 1 (653 aa).

The BTB domain occupies 35-103 (TDLLLICDGK…LYSGQVYVRS (69 aa)). Disordered stretches follow at residues 126–215 (NSDG…DRDR), 234–305 (NNHP…SDDA), 429–451 (LSNNNNSSSNNNNNNNRIRPPSA), and 512–534 (ELSARASAAGGGGGGSGGNGSGS). Positions 145–157 (NRNTEGITGSSVV) are enriched in polar residues. The span at 251–272 (GHHHHHHHHHHHRQLHQIKTRS) shows a compositional bias: basic residues. A compositionally biased stretch (polar residues) spans 286–299 (SDPVNLSIVKQQQD). Positions 430 to 444 (SNNNNSSSNNNNNNN) are enriched in low complexity. A compositionally biased stretch (gly residues) spans 520 to 534 (AGGGGGGSGGNGSGS). C2H2-type zinc fingers lie at residues 555–577 (YRCEYCGKTFGMSWNLKTHLRVH), 583–606 (FACRLCVAMFKQKAHLLKHLCSVH), and 619–641 (YTCCFCSLVFETLQELVRHLSGH).

Its subcellular location is the nucleus. Functionally, transcription factor required for terminalia development. Negative regulator of the JAK/STAT pathway: represses JAK/STAT-dependent expression of ventral veins lacking (vvl) in the posterior spiracles. The chain is Transcription factor Ken 1 from Culex quinquefasciatus (Southern house mosquito).